The sequence spans 98 residues: Mitochondrial import inner membrane translocase subunit tim8 (98 aa).

The short motif at C44–C67 is the Twin CX3C motif element. 2 disulfides stabilise this stretch: C44/C67 and C48/C63.

It belongs to the small Tim family. As to quaternary structure, heterohexamer; composed of 3 copies of TIM8 and 3 copies of TIM13, named soluble 70 kDa complex. Associates with the TIM22 complex, whose core is composed of TIM22 and TIM54. Interacts with the transmembrane regions of multi-pass transmembrane proteins in transit.

It localises to the mitochondrion inner membrane. In terms of biological role, mitochondrial intermembrane chaperone that participates in the import and insertion of some multi-pass transmembrane proteins into the mitochondrial inner membrane. Also required for the transfer of beta-barrel precursors from the TOM complex to the sorting and assembly machinery (SAM complex) of the outer membrane. Acts as a chaperone-like protein that protects the hydrophobic precursors from aggregation and guide them through the mitochondrial intermembrane space. The TIM8-TIM13 complex is non essential and only mediates the import of few proteins, while the predominant TIM9-TIM10 70 kDa complex is crucial and mediates the import of much more proteins. This is Mitochondrial import inner membrane translocase subunit tim8 (tim8) from Schizosaccharomyces pombe (strain 972 / ATCC 24843) (Fission yeast).